Here is a 299-residue protein sequence, read N- to C-terminus: MAEFPASLLILNGKSTDNLPLREAIMLLREEGMTIHVRVTWEKGDAARFVEEARKLGVATVIAGGGDGTINEVCTALIQCEGDDIPALGILPLGTANDFATSVGIPEALDKALKLAIAGNAIAIDMAQVNKQTCFINMATGGFGTRITTETPEKLKAALGGVSYIIHGLMRMDTLQPDRCEIRGENFHWQGDALVIGIGNGRQAGGGQQLCPNALINDGLLQLRIFTGDEILPALVSTLKSDEDNPNIIEGASSWFDIQAPHEITFNLDGEPLSGQNFHIEILPAALRCRLPPDCPLLR.

The DAGKc domain maps to 2–133; it reads AEFPASLLIL…IDMAQVNKQT (132 aa). ATP-binding positions include Thr40, 66 to 72, and Thr95; that span reads GDGTINE. Residues Leu215, Asp218, and Leu220 each contribute to the Mg(2+) site. The active-site Proton acceptor is Glu271.

It belongs to the diacylglycerol/lipid kinase family. YegS lipid kinase subfamily. It depends on Mg(2+) as a cofactor. Requires Ca(2+) as cofactor.

It is found in the cytoplasm. Probably phosphorylates lipids; the in vivo substrate is unknown. This Shigella flexneri protein is Probable lipid kinase YegS.